The sequence spans 1256 residues: MELAAWCRWGFLLALLSPGAAGTQVCTGTDMKLRLPASPETHLDMLRHLYQGCQVVQGNLELTYLPANASLSFLQDIQEVQGYMLIAHNRVKHVPLQRLRIVRGTQLFEDKYALAVLDNRDPLDNVTTAAPGRTPEGLRELQLRSLTEILKGGVLIRGNPQLCYQDMVLWKDVLRKNNQLAPVDMDTNRSRACPPCAPTCKDNHCWGESPEDCQILTGTICTSGCARCKGRLPTDCCHEQCAAGCTGPKHSDCLACLHFNHSGICELHCPALITYNTDTFESMLNPEGRYTFGASCVTTCPYNYLSTEVGSCTLVCPPNNQEVTAEDGTQRCEKCSKPCAGVCYGLGMEHLRGARAITSDNIQEFAGCKKIFGSLAFLPESFDGNPSSGVAPLKPEHLQVFETLEEITGYLYISAWPESFQDLSVFQNLRVIRGRILHDGAYSLTLQGLGIHSLGLRSLRELGSGLALIHRNTHLCFVNTVPWDQLFRNPHQALLHSGNRPEEACGLEGLVCNSLCARGHCWGPGPTQCVNCSQFLRGQECVEECRVWKGLPREYVRGKHCLPCHPECQPQNSSETCYGSEADQCEACAHYKDSSSCVARCPSGVKPDLSYMPIWKYPDEEGICQPCPINCTHSCVDLDERGCPAEQRASPVTFIIATVVGVLLFLIIVVVIGILIKRRRQKIRKYTMRRLLQETELVEPLTPSGAVPNQAQMRILKETELRKLKVLGSGAFGTVYKGIWIPDGENVKIPVAIKVLRENTSPKANKEILDEAYVMAGVGSPYVSRLLGICLTSTVQLVTQLMPYGCLLDHVREHRGRLGSQDLLNWCVQIAKGMSYLEEVRLVHRDLAARNVLVKSPNHVKITDFGLARLLDIDETEYHADGGKVPIKWMALESILRRRFTHQSDVWSYGVTVWELMTFGAKPYDGIPAREIPDLLEKGERLPQPPICTIDVYMIMVKCWMIDSECRPRFRELVSEFSRMARDPQRFVVIQNEDLGPSSPMDSTFYRSLLEDDDMGELVDAEEYLVPQQGFFSPDPALGTGSTAHRRHRSSSARSGGGELTLGLEPSEEEPPRSPLAPSEGAGSDVFDGDLAVGVTKGLQSLSPHDLSPLQRYSEDPTLPLPPETDGYVAPLACSPQPEYVNQPEVRPQSPLTPEGPPPPIRPAGATLERPKTLSPGKNGVVKDVFAFGGAVENPEYLAPRAGTASQPHPSPAFSPAFDNLYYWDQNSSEQGPPPSTFEGTPTAENPEYLGLDVPV.

A signal peptide spans 1–22 (MELAAWCRWGFLLALLSPGAAG). Over 23–653 (TQVCTGTDMK…PAEQRASPVT (631 aa)) the chain is Extracellular. Cysteine 26 and cysteine 53 are disulfide-bonded. N-linked (GlcNAc...) asparagine glycans are attached at residues asparagine 68, asparagine 125, and asparagine 188. 16 cysteine pairs are disulfide-bonded: cysteine 163/cysteine 193, cysteine 196/cysteine 205, cysteine 200/cysteine 213, cysteine 221/cysteine 228, cysteine 225/cysteine 236, cysteine 237/cysteine 245, cysteine 241/cysteine 253, cysteine 256/cysteine 265, cysteine 269/cysteine 296, cysteine 300/cysteine 312, cysteine 316/cysteine 332, cysteine 335/cysteine 339, cysteine 343/cysteine 368, cysteine 476/cysteine 505, cysteine 512/cysteine 521, and cysteine 516/cysteine 529. Asparagine 260 carries an N-linked (GlcNAc...) asparagine glycan. N-linked (GlcNAc...) asparagine glycosylation is present at asparagine 531. 8 disulfide bridges follow: cysteine 532–cysteine 541, cysteine 545–cysteine 561, cysteine 564–cysteine 577, cysteine 568–cysteine 585, cysteine 588–cysteine 597, cysteine 601–cysteine 624, cysteine 627–cysteine 635, and cysteine 631–cysteine 643. N-linked (GlcNAc...) asparagine glycosylation is present at asparagine 572. The N-linked (GlcNAc...) asparagine glycan is linked to asparagine 630. Residues 654–674 (FIIATVVGVLLFLIIVVVIGI) traverse the membrane as a helical segment. Topologically, residues 675–1256 (LIKRRRQKIR…PEYLGLDVPV (582 aa)) are cytoplasmic. Residues 677–690 (KRRRQKIRKYTMRR) are required for interaction with KPNB1 and EEA1. The Nuclear localization signal motif lies at 677-690 (KRRRQKIRKYTMRR). The 268-residue stretch at 721–988 (LRKLKVLGSG…RMARDPQRFV (268 aa)) folds into the Protein kinase domain. Residues 727 to 735 (LGSGAFGTV) and lysine 754 each bind ATP. Aspartate 846 serves as the catalytic Proton acceptor. Tyrosine 878 carries the phosphotyrosine modification. Positions 1030–1180 (GFFSPDPALG…PKTLSPGKNG (151 aa)) are disordered. Serine 1055, serine 1079, serine 1084, and serine 1108 each carry phosphoserine. Tyrosine 1113 carries the phosphotyrosine modification. Tyrosine 1140 bears the Phosphotyrosine; by autocatalysis mark. Threonine 1167 bears the Phosphothreonine mark. The segment at 1196–1198 (EYL) is interaction with PIK3C2B. The residue at position 1197 (tyrosine 1197) is a Phosphotyrosine. Disordered regions lie at residues 1200 to 1219 (PRAGTASQPHPSPAFSPAFD) and 1224 to 1256 (WDQNSSEQGPPPSTFEGTPTAENPEYLGLDVPV). Phosphotyrosine; by autocatalysis is present on tyrosine 1249.

The protein belongs to the protein kinase superfamily. Tyr protein kinase family. EGF receptor subfamily. Homodimer. Heterodimer with EGFR, ERBB3 and ERBB4. Part of a complex with EGFR and either PIK3C2A or PIK3C2B. May interact with PIK3C2B when phosphorylated on Tyr-1197. Interacts with PLXNB1. Interacts (when phosphorylated on Tyr-1249) with MEMO1. Interacts with MUC1. Interacts (when phosphorylated on Tyr-1140) with GRB7 (via SH2 domain). Interacts (when phosphorylated on Tyr-1249) with ERBIN. Interacts with KPNB1, RANBP2, EEA1, CRM1, CLTC, PTK6, RPA194 and ACTB. Interacts (preferentially with the tyrosine phosphorylated form) with CPNE3; this interaction occurs at the cell membrane and is increased in a growth factor heregulin-dependent manner. Interacts with HSP90AA1 and HSP90AB1 in an ATP-dependent manner; the interaction suppresses ERBB2 kinase activity. Interacts with SRC. Interacts with MYOC. Interacts with PRKCABP. Interacts with SORL1; this interaction regulates ERBB2 subcellular distribution by promoting its recycling after internalization from endosomes back to the plasma membrane, hence stimulates ERBB2-mediated signaling. Interacts with SH3BGRL. Interacts with ROR1. In terms of processing, autophosphorylated. Autophosphorylation occurs in trans, i.e. one subunit of the dimeric receptor phosphorylates tyrosine residues on the other subunit. Ligand-binding increases phosphorylation on tyrosine residues. Signaling via SEMA4C promotes phosphorylation at Tyr-1249. Dephosphorylated by PTPN12. In terms of tissue distribution, expressed predominantly in uterine epithelial cells. In the muscle, expression localizes to the synaptic sites of muscle fibers.

It is found in the cell membrane. Its subcellular location is the cell projection. It localises to the ruffle membrane. The protein resides in the early endosome. The protein localises to the cytoplasm. It is found in the perinuclear region. Its subcellular location is the nucleus. The enzyme catalyses L-tyrosyl-[protein] + ATP = O-phospho-L-tyrosyl-[protein] + ADP + H(+). In terms of biological role, protein tyrosine kinase that is part of several cell surface receptor complexes, but that apparently needs a coreceptor for ligand binding. Essential component of a neuregulin-receptor complex, although neuregulins do not interact with it alone. GP30 is a potential ligand for this receptor. Regulates outgrowth and stabilization of peripheral microtubules (MTs). Upon ERBB2 activation, the MEMO1-RHOA-DIAPH1 signaling pathway elicits the phosphorylation and thus the inhibition of GSK3B at cell membrane. This prevents the phosphorylation of APC and CLASP2, allowing its association with the cell membrane. In turn, membrane-bound APC allows the localization of MACF1 to the cell membrane, which is required for microtubule capture and stabilization. In the nucleus is involved in transcriptional regulation. Associates with the 5'-TCAAATTC-3' sequence in the PTGS2/COX-2 promoter and activates its transcription. Implicated in transcriptional activation of CDKN1A; the function involves STAT3 and SRC. Involved in the transcription of rRNA genes by RNA Pol I and enhances protein synthesis and cell growth. In Mus musculus (Mouse), this protein is Receptor tyrosine-protein kinase erbB-2 (Erbb2).